The sequence spans 553 residues: Dihydroxy-acid dehydratase (553 aa).

Aspartate 78 contacts Mg(2+). Cysteine 119 serves as a coordination point for [2Fe-2S] cluster. Positions 120 and 121 each coordinate Mg(2+). The residue at position 121 (lysine 121) is an N6-carboxylysine. Position 191 (cysteine 191) interacts with [2Fe-2S] cluster. Glutamate 444 contributes to the Mg(2+) binding site. The active-site Proton acceptor is serine 470.

Belongs to the IlvD/Edd family. Homodimer. The cofactor is [2Fe-2S] cluster. Mg(2+) is required as a cofactor.

It catalyses the reaction (2R)-2,3-dihydroxy-3-methylbutanoate = 3-methyl-2-oxobutanoate + H2O. It carries out the reaction (2R,3R)-2,3-dihydroxy-3-methylpentanoate = (S)-3-methyl-2-oxopentanoate + H2O. Its pathway is amino-acid biosynthesis; L-isoleucine biosynthesis; L-isoleucine from 2-oxobutanoate: step 3/4. It participates in amino-acid biosynthesis; L-valine biosynthesis; L-valine from pyruvate: step 3/4. Functionally, functions in the biosynthesis of branched-chain amino acids. Catalyzes the dehydration of (2R,3R)-2,3-dihydroxy-3-methylpentanoate (2,3-dihydroxy-3-methylvalerate) into 2-oxo-3-methylpentanoate (2-oxo-3-methylvalerate) and of (2R)-2,3-dihydroxy-3-methylbutanoate (2,3-dihydroxyisovalerate) into 2-oxo-3-methylbutanoate (2-oxoisovalerate), the penultimate precursor to L-isoleucine and L-valine, respectively. This is Dihydroxy-acid dehydratase from Methanosarcina barkeri (strain Fusaro / DSM 804).